A 44-amino-acid polypeptide reads, in one-letter code: Photosystem I reaction center subunit IX (44 aa).

A helical transmembrane segment spans residues Y7–I27.

This sequence belongs to the PsaJ family.

It localises to the plastid. Its subcellular location is the chloroplast thylakoid membrane. In terms of biological role, may help in the organization of the PsaE and PsaF subunits. The protein is Photosystem I reaction center subunit IX of Liriodendron tulipifera (Tuliptree).